Here is a 288-residue protein sequence, read N- to C-terminus: Transformer-2 protein homolog beta (288 aa).

Disordered stretches follow at residues 1–114 and 196–225; these read MSDS…RANP and TKRP…YDRG. The residue at position 2 (Ser2) is an N-acetylserine. Residues Ser2, Ser4, and Ser14 each carry the phosphoserine modification. Residues 17 to 28 show a composition bias toward low complexity; it reads ASRSGSAHGSGK. Ser29 carries the post-translational modification Phosphoserine. Thr33 carries the post-translational modification Phosphothreonine. Over residues 59 to 109 the composition is skewed to basic residues; it reads RSRRSSRRHYTRSRSRSRSHRRSRSRSYSRDYRRRHSHSHSPMSTRRRHVG. Ser83, Ser85, Ser87, Ser95, Ser97, and Ser99 each carry phosphoserine. At Thr103 the chain carries Phosphothreonine. In terms of domain architecture, RRM spans 118 to 196; sequence CCLGVFGLSL…RRIRVDFSIT (79 aa). Residues 193–230 are linker; it reads FSITKRPHTPTPGIYMGRPTYGSSRRRDYYDRGYDRGY. A Glycyl lysine isopeptide (Lys-Gly) (interchain with G-Cter in SUMO2) cross-link involves residue Lys197. Phosphothreonine occurs at positions 201 and 203. Residues Ser215 and Ser237 each carry the phosphoserine modification. At Arg241 the chain carries Asymmetric dimethylarginine; alternate. A Dimethylated arginine; alternate modification is found at Arg241. An Omega-N-methylarginine; alternate modification is found at Arg241. The tract at residues 242–288 is disordered; the sequence is GGGGGGGGWRAAQDRDQIYRRRSPSPYYSRGGYRSRSRSRSYSPRRY. Positions 274-288 are enriched in basic residues; sequence YRSRSRSRSYSPRRY.

It belongs to the splicing factor SR family. Found in a pre-mRNA exonic splicing enhancer (ESE) complex with TRA2B/SFRS10, SNRNP70, SNRPA1 and SRRM1. Binds to A3 enhancer proteins SFRS4, SFRS5, SFRS6 and SFRS9. Interacts with CPSF6, RBMY1A1, RBMX, RNPS1 and phosphorylated SFRS13A. Interacts with SAFB/SAFB1. Interacts with ILDR1 (via C-terminus) and ILDR2. Phosphorylated in the RS domains.

It is found in the nucleus. Its function is as follows. Sequence-specific RNA-binding protein which participates in the control of pre-mRNA splicing. Can either activate or suppress exon inclusion. Acts additively with RBMX to promote exon 7 inclusion of the survival motor neuron SMN2. Activates the splicing of MAPT/Tau exon 10. Alters pre-mRNA splicing patterns by antagonizing the effects of splicing regulators, like RBMX. Binds to the AG-rich SE2 domain in the SMN exon 7 RNA. Binds to pre-mRNA. This chain is Transformer-2 protein homolog beta (TRA2B), found in Bos taurus (Bovine).